Reading from the N-terminus, the 320-residue chain is Delta-aminolevulinic acid dehydratase (320 aa).

Cys-119, Cys-121, and Cys-129 together coordinate Zn(2+). Residue Lys-194 is the Schiff-base intermediate with substrate of the active site. Residues Arg-204 and Arg-216 each coordinate 5-aminolevulinate. Glu-232 serves as a coordination point for Mg(2+). Lys-247 acts as the Schiff-base intermediate with substrate in catalysis. Ser-273 serves as a coordination point for 5-aminolevulinate.

It belongs to the ALAD family. In terms of assembly, homooctamer. The cofactor is Zn(2+).

It catalyses the reaction 2 5-aminolevulinate = porphobilinogen + 2 H2O + H(+). The protein operates within porphyrin-containing compound metabolism; protoporphyrin-IX biosynthesis; coproporphyrinogen-III from 5-aminolevulinate: step 1/4. Catalyzes an early step in the biosynthesis of tetrapyrroles. Binds two molecules of 5-aminolevulinate per subunit, each at a distinct site, and catalyzes their condensation to form porphobilinogen. This chain is Delta-aminolevulinic acid dehydratase (hemB), found in Methanothermus sociabilis.